A 250-amino-acid chain; its full sequence is 5'-nucleotidase SurE (250 aa).

A divalent metal cation contacts are provided by Asp9, Asp10, Ser40, and Asn92.

This sequence belongs to the SurE nucleotidase family. The cofactor is a divalent metal cation.

It localises to the cytoplasm. The enzyme catalyses a ribonucleoside 5'-phosphate + H2O = a ribonucleoside + phosphate. In terms of biological role, nucleotidase that shows phosphatase activity on nucleoside 5'-monophosphates. This chain is 5'-nucleotidase SurE, found in Idiomarina loihiensis (strain ATCC BAA-735 / DSM 15497 / L2-TR).